Consider the following 232-residue polypeptide: Enolase-phosphatase E1 (232 aa).

It belongs to the HAD-like hydrolase superfamily. MasA/MtnC family. As to quaternary structure, monomer. Mg(2+) serves as cofactor.

It catalyses the reaction 5-methylsulfanyl-2,3-dioxopentyl phosphate + H2O = 1,2-dihydroxy-5-(methylsulfanyl)pent-1-en-3-one + phosphate. The protein operates within amino-acid biosynthesis; L-methionine biosynthesis via salvage pathway; L-methionine from S-methyl-5-thio-alpha-D-ribose 1-phosphate: step 3/6. It participates in amino-acid biosynthesis; L-methionine biosynthesis via salvage pathway; L-methionine from S-methyl-5-thio-alpha-D-ribose 1-phosphate: step 4/6. In terms of biological role, bifunctional enzyme that catalyzes the enolization of 2,3-diketo-5-methylthiopentyl-1-phosphate (DK-MTP-1-P) into the intermediate 2-hydroxy-3-keto-5-methylthiopentenyl-1-phosphate (HK-MTPenyl-1-P), which is then dephosphorylated to form the acireductone 1,2-dihydroxy-3-keto-5-methylthiopentene (DHK-MTPene). The polypeptide is Enolase-phosphatase E1 (Xanthomonas oryzae pv. oryzae (strain KACC10331 / KXO85)).